The following is a 914-amino-acid chain: Protein translocase subunit SecA (914 aa).

Residues Gln-87, 105–109 (GEGKT), and Asp-508 each bind ATP. The Zn(2+) site is built by Cys-898, Cys-900, Cys-909, and His-910.

Belongs to the SecA family. As to quaternary structure, monomer and homodimer. Part of the essential Sec protein translocation apparatus which comprises SecA, SecYEG and auxiliary proteins SecDF-YajC and YidC. It depends on Zn(2+) as a cofactor.

The protein localises to the cell inner membrane. It localises to the cytoplasm. It catalyses the reaction ATP + H2O + cellular proteinSide 1 = ADP + phosphate + cellular proteinSide 2.. Part of the Sec protein translocase complex. Interacts with the SecYEG preprotein conducting channel. Has a central role in coupling the hydrolysis of ATP to the transfer of proteins into and across the cell membrane, serving both as a receptor for the preprotein-SecB complex and as an ATP-driven molecular motor driving the stepwise translocation of polypeptide chains across the membrane. The chain is Protein translocase subunit SecA from Xylella fastidiosa (strain M23).